Reading from the N-terminus, the 148-residue chain is Globin, monomeric component M-IV (148 aa).

Positions 2–147 constitute a Globin domain; that stretch reads GLSAAQRQVV…ISGALISGLQ (146 aa). His-91 lines the heme b pocket.

In terms of assembly, monomer.

This chain is Globin, monomeric component M-IV, found in Glycera dibranchiata (Bloodworm).